A 233-amino-acid chain; its full sequence is Phosphoribosylformylglycinamidine synthase subunit PurQ (233 aa).

The 231-residue stretch at 3–233 folds into the Glutamine amidotransferase type-1 domain; it reads SAILVFPGIN…GLVAHLERAA (231 aa). Residue C87 is the Nucleophile of the active site. Active-site residues include H204 and E206.

As to quaternary structure, part of the FGAM synthase complex composed of 1 PurL, 1 PurQ and 2 PurS subunits.

The protein resides in the cytoplasm. It catalyses the reaction N(2)-formyl-N(1)-(5-phospho-beta-D-ribosyl)glycinamide + L-glutamine + ATP + H2O = 2-formamido-N(1)-(5-O-phospho-beta-D-ribosyl)acetamidine + L-glutamate + ADP + phosphate + H(+). The enzyme catalyses L-glutamine + H2O = L-glutamate + NH4(+). It functions in the pathway purine metabolism; IMP biosynthesis via de novo pathway; 5-amino-1-(5-phospho-D-ribosyl)imidazole from N(2)-formyl-N(1)-(5-phospho-D-ribosyl)glycinamide: step 1/2. Functionally, part of the phosphoribosylformylglycinamidine synthase complex involved in the purines biosynthetic pathway. Catalyzes the ATP-dependent conversion of formylglycinamide ribonucleotide (FGAR) and glutamine to yield formylglycinamidine ribonucleotide (FGAM) and glutamate. The FGAM synthase complex is composed of three subunits. PurQ produces an ammonia molecule by converting glutamine to glutamate. PurL transfers the ammonia molecule to FGAR to form FGAM in an ATP-dependent manner. PurS interacts with PurQ and PurL and is thought to assist in the transfer of the ammonia molecule from PurQ to PurL. The chain is Phosphoribosylformylglycinamidine synthase subunit PurQ from Nitrobacter hamburgensis (strain DSM 10229 / NCIMB 13809 / X14).